We begin with the raw amino-acid sequence, 201 residues long: MEIKKAAFVISNTDVRKCPDTRLPEYAFIGRSNVGKSSLINMLTGQKGLAMTSQKPGKTQLINHFIIDDSWYLVDLPGYGYARLGASNRESLRRIIETYILCREQLSSLFVLIDCRHEPQKIDLEFLQWLGENGIPFSIVFTKADKLSFSRLKENTEAYKQKLLETWEELPPVFITSSEKKTGKEELLDYIDSINQELATK.

The EngB-type G domain occupies 22-197; it reads RLPEYAFIGR…LDYIDSINQE (176 aa). GTP is bound by residues 30 to 37, 57 to 61, 75 to 78, 142 to 145, and 173 to 178; these read GRSNVGKS, GKTQL, DLPG, TKAD, and VFITSS. Positions 37 and 59 each coordinate Mg(2+).

This sequence belongs to the TRAFAC class TrmE-Era-EngA-EngB-Septin-like GTPase superfamily. EngB GTPase family. Mg(2+) is required as a cofactor.

Necessary for normal cell division and for the maintenance of normal septation. The sequence is that of Probable GTP-binding protein EngB from Porphyromonas gingivalis (strain ATCC 33277 / DSM 20709 / CIP 103683 / JCM 12257 / NCTC 11834 / 2561).